A 389-amino-acid polypeptide reads, in one-letter code: Na(+)/H(+) antiporter NhaA 1 (389 aa).

The next 11 membrane-spanning stretches (helical) occupy residues 12 to 32 (VLNE…ALLV), 62 to 82 (FLLW…GLEL), 97 to 117 (IVLP…LFAL), 128 to 148 (GWAI…MMCG), 157 to 177 (IFLL…IAIF), 184 to 204 (IVAF…NLLG), 220 to 240 (ISVL…AFFI), 260 to 280 (FWIA…VNLS), 282 to 302 (IDIG…LFVG), 331 to 351 (LYGV…IDGL), and 365 to 385 (LAIL…LKFF).

It belongs to the NhaA Na(+)/H(+) (TC 2.A.33) antiporter family.

The protein resides in the cell inner membrane. The catalysed reaction is Na(+)(in) + 2 H(+)(out) = Na(+)(out) + 2 H(+)(in). In terms of biological role, na(+)/H(+) antiporter that extrudes sodium in exchange for external protons. This chain is Na(+)/H(+) antiporter NhaA 1, found in Campylobacter jejuni (strain RM1221).